The sequence spans 708 residues: Leukotoxin translocation ATP-binding protein LktB (708 aa).

The Peptidase C39 domain occupies 1–126 (MEANHQRNDL…ACYQGQLILV (126 aa)). Residues 155-437 (FLETLIVSIF…LAQLWQDFQQ (283 aa)) enclose the ABC transmembrane type-1 domain. 5 helical membrane-spanning segments follow: residues 159–179 (LIVS…FQVV), 192–212 (LNII…LSGL), 270–290 (ALTS…MWYY), 296–316 (LVIL…SPIL), and 389–409 (VMVI…LSIG). Residues 469–704 (IAFKNIRFRY…SNGLYSYLHQ (236 aa)) form the ABC transporter domain. 503–510 (GRSGSGKS) is an ATP binding site.

Belongs to the ABC transporter superfamily. Protein-1 exporter (TC 3.A.1.109) family. In terms of assembly, homodimer.

The protein localises to the cell inner membrane. The catalysed reaction is ATP + H2O + proteinSide 1 = ADP + phosphate + proteinSide 2.. In terms of biological role, part of the ABC transporter complex LktBD involved in leukotoxin export. Transmembrane domains (TMD) form a pore in the inner membrane and the ATP-binding domain (NBD) is responsible for energy generation. This Mannheimia glucosida protein is Leukotoxin translocation ATP-binding protein LktB (lktB).